The following is a 263-amino-acid chain: Small ribosomal subunit protein uS3 (263 aa).

In terms of domain architecture, KH type-2 spans 40–108; that stretch reads IRNYLFKKFH…HIKVDVDVLE (69 aa). Residues 224 to 263 form a disordered region; it reads KPKGSEANHQRRNSNKSKDYRDNKNKQFNKNHQNQQPAKE. Positions 239 to 248 are enriched in basic and acidic residues; it reads KSKDYRDNKN. Positions 249–263 are enriched in low complexity; that stretch reads KQFNKNHQNQQPAKE.

This sequence belongs to the universal ribosomal protein uS3 family. Part of the 30S ribosomal subunit. Forms a tight complex with proteins S10 and S14.

Functionally, binds the lower part of the 30S subunit head. Binds mRNA in the 70S ribosome, positioning it for translation. The polypeptide is Small ribosomal subunit protein uS3 (Mycoplasmoides gallisepticum (strain R(low / passage 15 / clone 2)) (Mycoplasma gallisepticum)).